Reading from the N-terminus, the 706-residue chain is SPX domain-containing membrane protein Os09g0521800 (706 aa).

The SPX domain maps to 2–145 (VNFSNKLTKD…GYKFTDYYVR (144 aa)). Transmembrane regions (helical) follow at residues 251–271 (MSLVLNLANTFLYMVNTYIVV), 281–301 (LGAAATACGAVIGSMAVAQVF), 318–338 (LLFSSVVLLLGNVMYAMAFDL), 340–359 (SLTILLLGRVLCGMGSARAV), 378–398 (AAFVSASALGMACGPALAGLL), and 414–434 (LPGWIMAFGWLVYLIWLWILF). The tract at residues 475–498 (SEQDEEDDNGDEEHNETLSSSTTT) is disordered. The span at 476-488 (EQDEEDDNGDEEH) shows a compositional bias: acidic residues. The next 5 helical transmembrane spans lie at 520-540 (LLIYFMLKYAMEILLAESSVV), 554-574 (VFLAVLGLSVLPVNAIVGTYI), 583-603 (ILVASEMALLAGVMLSFKLTV), 611-631 (VCSAVLTFVSAEVVEGVNLSL), and 678-698 (LLNATLLPALLVCVASIAATL).

This sequence belongs to the major facilitator superfamily.

It localises to the membrane. This chain is SPX domain-containing membrane protein Os09g0521800, found in Oryza sativa subsp. japonica (Rice).